Reading from the N-terminus, the 339-residue chain is Tryptophan--tRNA ligase (339 aa).

ATP-binding positions include 11–13 (QPT) and 19–20 (GN). The 'HIGH' region signature appears at 12–20 (PTGAIHIGN). Asp-135 is an L-tryptophan binding site. Residues 147–149 (GED), Ile-191, and 200–204 (KMSKS) contribute to the ATP site. The short motif at 200–204 (KMSKS) is the 'KMSKS' region element.

It belongs to the class-I aminoacyl-tRNA synthetase family. As to quaternary structure, homodimer.

Its subcellular location is the cytoplasm. It catalyses the reaction tRNA(Trp) + L-tryptophan + ATP = L-tryptophyl-tRNA(Trp) + AMP + diphosphate + H(+). Catalyzes the attachment of tryptophan to tRNA(Trp). This is Tryptophan--tRNA ligase from Prochlorococcus marinus (strain SARG / CCMP1375 / SS120).